Here is a 311-residue protein sequence, read N- to C-terminus: 4-hydroxy-tetrahydrodipicolinate synthase (311 aa).

Threonine 49 serves as a coordination point for pyruvate. Residue tyrosine 138 is the Proton donor/acceptor of the active site. Lysine 166 functions as the Schiff-base intermediate with substrate in the catalytic mechanism. Isoleucine 207 contributes to the pyruvate binding site.

Belongs to the DapA family. Homotetramer; dimer of dimers.

The protein resides in the cytoplasm. The catalysed reaction is L-aspartate 4-semialdehyde + pyruvate = (2S,4S)-4-hydroxy-2,3,4,5-tetrahydrodipicolinate + H2O + H(+). It functions in the pathway amino-acid biosynthesis; L-lysine biosynthesis via DAP pathway; (S)-tetrahydrodipicolinate from L-aspartate: step 3/4. Its function is as follows. Catalyzes the condensation of (S)-aspartate-beta-semialdehyde [(S)-ASA] and pyruvate to 4-hydroxy-tetrahydrodipicolinate (HTPA). The protein is 4-hydroxy-tetrahydrodipicolinate synthase of Lactobacillus acidophilus (strain ATCC 700396 / NCK56 / N2 / NCFM).